The following is a 482-amino-acid chain: MTMSKEAVTFKDVAVVFTEEELGLLDLAQRKLYRDVMLENFRNLLSVGHQPFHRDTFHFLREEKFWMMDIATQREGNSGGKIQPEMKTFPEAGPHEGWSCQQIWEEIASDLTRPQDSTIKSSQFFEQGDAHSQVEEGLSIMHTGQKPSNCGKCKQSFSDMSIFDLPQQIRSAEKSHSCDECGKSFCYISALHIHQRVHLGEKLFKCDVCGKEFSQSLHLQTHQRVHTGEKPFKCEQCGRGFRCRSALTVHCKLHMGEKHYNCEACGRAFIHDFQLQKHQRIHTGEKPFKCEICSVSFRLRSSLNRHCVVHTGKKPNSTGEYGKGFIRRLDLCKHQTIHTGEKPYNCKECGKSFRRSSYLLIHQRVHTGEKPYKCDKCGKSYITKSGLDLHHRAHTGERPYNCDDCGKSFRQASSILNHKRLHCRKKPFKCEDCGKKLVYRSYRKDQQKNHSGENPSKCEDCGKRYKRRLNLDIILSLFLNDT.

A KRAB domain is found at 8–78; it reads VTFKDVAVVF…DIATQREGNS (71 aa). 5 consecutive C2H2-type zinc fingers follow at residues 176–198, 204–226, 232–254, 260–282, and 288–310; these read HSCD…QRVH, FKCD…QRVH, FKCE…CKLH, YNCE…QRIH, and FKCE…CVVH. The C2H2-type 6; degenerate zinc-finger motif lies at 316 to 338; it reads NSTGEYGKGFIRRLDLCKHQTIH. C2H2-type zinc fingers lie at residues 344–366, 372–394, and 400–422; these read YNCK…QRVH, YKCD…HRAH, and YNCD…KRLH. The segment at 428–450 adopts a C2H2-type 10; degenerate zinc-finger fold; it reads FKCEDCGKKLVYRSYRKDQQKNH.

Belongs to the krueppel C2H2-type zinc-finger protein family.

The protein resides in the nucleus. May be involved in transcriptional regulation. In Homo sapiens (Human), this protein is Zinc finger protein 223 (ZNF223).